A 495-amino-acid polypeptide reads, in one-letter code: Membrane-bound lytic murein transglycosylase F (495 aa).

The signal sequence occupies residues 1–29 (MEIRKLSLSTIRSIITSLSVLVLVISASA). The segment at 30-273 (TLVRSTPPNV…VTKHFFERHI (244 aa)) is non-LT domain. The LT domain stretch occupies residues 274–495 (DEVTTGEAMV…TAAQGENLSL (222 aa)). Residue E320 is part of the active site.

It in the N-terminal section; belongs to the bacterial solute-binding protein 3 family. The protein in the C-terminal section; belongs to the transglycosylase Slt family.

It localises to the cell outer membrane. The catalysed reaction is Exolytic cleavage of the (1-&gt;4)-beta-glycosidic linkage between N-acetylmuramic acid (MurNAc) and N-acetylglucosamine (GlcNAc) residues in peptidoglycan, from either the reducing or the non-reducing ends of the peptidoglycan chains, with concomitant formation of a 1,6-anhydrobond in the MurNAc residue.. Functionally, murein-degrading enzyme that degrades murein glycan strands and insoluble, high-molecular weight murein sacculi, with the concomitant formation of a 1,6-anhydromuramoyl product. Lytic transglycosylases (LTs) play an integral role in the metabolism of the peptidoglycan (PG) sacculus. Their lytic action creates space within the PG sacculus to allow for its expansion as well as for the insertion of various structures such as secretion systems and flagella. The protein is Membrane-bound lytic murein transglycosylase F of Cellvibrio japonicus (strain Ueda107) (Pseudomonas fluorescens subsp. cellulosa).